A 334-amino-acid polypeptide reads, in one-letter code: Phosphoribosylformylglycinamidine cyclo-ligase (334 aa).

The protein belongs to the AIR synthase family.

Its subcellular location is the cytoplasm. The enzyme catalyses 2-formamido-N(1)-(5-O-phospho-beta-D-ribosyl)acetamidine + ATP = 5-amino-1-(5-phospho-beta-D-ribosyl)imidazole + ADP + phosphate + H(+). It participates in purine metabolism; IMP biosynthesis via de novo pathway; 5-amino-1-(5-phospho-D-ribosyl)imidazole from N(2)-formyl-N(1)-(5-phospho-D-ribosyl)glycinamide: step 2/2. This chain is Phosphoribosylformylglycinamidine cyclo-ligase, found in Pyrococcus abyssi (strain GE5 / Orsay).